The following is a 159-amino-acid chain: ATP synthase subunit b 2 (159 aa).

The helical transmembrane segment at 1 to 21 threads the bilayer; that stretch reads MDATFWALIGLIIFLAILAYL.

Belongs to the ATPase B chain family. In terms of assembly, F-type ATPases have 2 components, F(1) - the catalytic core - and F(0) - the membrane proton channel. F(1) has five subunits: alpha(3), beta(3), gamma(1), delta(1), epsilon(1). F(0) has three main subunits: a(1), b(2) and c(10-14). The alpha and beta chains form an alternating ring which encloses part of the gamma chain. F(1) is attached to F(0) by a central stalk formed by the gamma and epsilon chains, while a peripheral stalk is formed by the delta and b chains.

The protein localises to the cell inner membrane. In terms of biological role, f(1)F(0) ATP synthase produces ATP from ADP in the presence of a proton or sodium gradient. F-type ATPases consist of two structural domains, F(1) containing the extramembraneous catalytic core and F(0) containing the membrane proton channel, linked together by a central stalk and a peripheral stalk. During catalysis, ATP synthesis in the catalytic domain of F(1) is coupled via a rotary mechanism of the central stalk subunits to proton translocation. Its function is as follows. Component of the F(0) channel, it forms part of the peripheral stalk, linking F(1) to F(0). The chain is ATP synthase subunit b 2 from Brucella anthropi (strain ATCC 49188 / DSM 6882 / CCUG 24695 / JCM 21032 / LMG 3331 / NBRC 15819 / NCTC 12168 / Alc 37) (Ochrobactrum anthropi).